Reading from the N-terminus, the 206-residue chain is Large ribosomal subunit protein uL4 (206 aa).

The interval 47 to 76 is disordered; it reads GTQSAKTRAEVSGGGIKPWRQKGTGRARQG.

Belongs to the universal ribosomal protein uL4 family. In terms of assembly, part of the 50S ribosomal subunit.

One of the primary rRNA binding proteins, this protein initially binds near the 5'-end of the 23S rRNA. It is important during the early stages of 50S assembly. It makes multiple contacts with different domains of the 23S rRNA in the assembled 50S subunit and ribosome. Its function is as follows. Forms part of the polypeptide exit tunnel. The polypeptide is Large ribosomal subunit protein uL4 (Clostridium botulinum (strain Okra / Type B1)).